The primary structure comprises 198 residues: Protein GrpE (198 aa).

Residues 1 to 32 form a disordered region; the sequence is MTTEKETATPADVEVASQEEQIDQTTEAQVEE.

The protein belongs to the GrpE family. As to quaternary structure, homodimer.

The protein resides in the cytoplasm. Its function is as follows. Participates actively in the response to hyperosmotic and heat shock by preventing the aggregation of stress-denatured proteins, in association with DnaK and GrpE. It is the nucleotide exchange factor for DnaK and may function as a thermosensor. Unfolded proteins bind initially to DnaJ; upon interaction with the DnaJ-bound protein, DnaK hydrolyzes its bound ATP, resulting in the formation of a stable complex. GrpE releases ADP from DnaK; ATP binding to DnaK triggers the release of the substrate protein, thus completing the reaction cycle. Several rounds of ATP-dependent interactions between DnaJ, DnaK and GrpE are required for fully efficient folding. This is Protein GrpE from Haemophilus ducreyi (strain 35000HP / ATCC 700724).